We begin with the raw amino-acid sequence, 67 residues long: MKYFLVLVVLTLILAISVGQSDALFVDIIDNVENAIHKAAKTGIGMVKPIENIFIPNQQKKSTEASN.

Positions 1-19 (MKYFLVLVVLTLILAISVG) are cleaved as a signal peptide.

This sequence belongs to the andropin family. In terms of tissue distribution, ejaculatory duct of adult males.

It localises to the secreted. In terms of biological role, male-specific peptide with moderate activity against Gram-positive bacteria. The chain is Andropin (Anp) from Drosophila orena (Fruit fly).